Reading from the N-terminus, the 458-residue chain is cAMP-dependent protein kinase regulatory subunit (458 aa).

The interval 28–222 (QFAANYFNKK…GLESAVGKNF (195 aa)) is dimerization and phosphorylation. Ser184 carries the post-translational modification Phosphoserine. Residues 223-338 (LFNK…FLKS), Glu288, Arg297, 341-457 (LLKS…RADK), Glu407, and Arg416 contribute to the 3',5'-cyclic AMP site.

It belongs to the cAMP-dependent kinase regulatory chain family. As to quaternary structure, tetramer, composed of 2 regulatory (R) and 2 catalytic (C) subunits. In the presence of cAMP it dissociates into 2 active monomeric C subunits and an R dimer.

The protein is cAMP-dependent protein kinase regulatory subunit (PKAR) of Eremothecium gossypii (strain ATCC 10895 / CBS 109.51 / FGSC 9923 / NRRL Y-1056) (Yeast).